A 295-amino-acid chain; its full sequence is MRKLLLIITVFFTFNVAQASLPNIVASVNDEPITLNEFRARKKMIMALNNVESLTPAQDKQLSDLALKSLIDESLLFQYAGDREIPQEEIENAIKSIEDRNKMPHGSLLQYLKSRSVNPDSFISQIKSELIKMNILSSLSRSVQVSNKEIDVAILSSDQKDVEISMQVFTSKDGGNKAFTQMNNLKNRLKKCADVKKSLYDNFATMQIITDKLSKIEGVKQTIVKDLTPDKASNVFEVNNKFEITLVCSKKILNVNEDENNYVVNFLTNKKISQKAQKMFENMRKKAAIKIMLPS.

An N-terminal signal peptide occupies residues 1 to 19; the sequence is MRKLLLIITVFFTFNVAQA.

This is an uncharacterized protein from Rickettsia conorii (strain ATCC VR-613 / Malish 7).